The primary structure comprises 174 residues: NADH-quinone oxidoreductase subunit B 2 (174 aa).

Residues cysteine 38, cysteine 39, cysteine 104, and cysteine 133 each contribute to the [4Fe-4S] cluster site.

The protein belongs to the complex I 20 kDa subunit family. As to quaternary structure, NDH-1 is composed of 14 different subunits. Subunits NuoB, C, D, E, F, and G constitute the peripheral sector of the complex. It depends on [4Fe-4S] cluster as a cofactor.

It localises to the cell membrane. The catalysed reaction is a quinone + NADH + 5 H(+)(in) = a quinol + NAD(+) + 4 H(+)(out). Functionally, NDH-1 shuttles electrons from NADH, via FMN and iron-sulfur (Fe-S) centers, to quinones in the respiratory chain. The immediate electron acceptor for the enzyme in this species is believed to be ubiquinone. Couples the redox reaction to proton translocation (for every two electrons transferred, four hydrogen ions are translocated across the cytoplasmic membrane), and thus conserves the redox energy in a proton gradient. The protein is NADH-quinone oxidoreductase subunit B 2 of Chloroflexus aurantiacus (strain ATCC 29366 / DSM 635 / J-10-fl).